Here is a 482-residue protein sequence, read N- to C-terminus: Catalase (482 aa).

Residues 1 to 23 show a composition bias toward polar residues; that stretch reads MSQNKTLTTASGPPVADNQNSRS. The interval 1-28 is disordered; sequence MSQNKTLTTASGPPVADNQNSRSAGPRG. Catalysis depends on residues His-55 and Asn-128. Tyr-338 is a binding site for heme. The disordered stretch occupies residues 370–395; the sequence is SMAFGSNGGAAPNYEPNSYADAPKQA.

Belongs to the catalase family. Heme is required as a cofactor.

It catalyses the reaction 2 H2O2 = O2 + 2 H2O. Its function is as follows. Decomposes hydrogen peroxide into water and oxygen; serves to protect cells from the toxic effects of hydrogen peroxide. This is Catalase (cat) from Onchocerca volvulus endobacterium.